The sequence spans 225 residues: Cytidylate kinase (225 aa).

An ATP-binding site is contributed by 12–20; sequence GPSGAGKGT.

The protein belongs to the cytidylate kinase family. Type 1 subfamily.

The protein resides in the cytoplasm. It catalyses the reaction CMP + ATP = CDP + ADP. The enzyme catalyses dCMP + ATP = dCDP + ADP. The polypeptide is Cytidylate kinase (Stenotrophomonas maltophilia (strain K279a)).